Reading from the N-terminus, the 131-residue chain is Small ribosomal subunit protein uS8 (131 aa).

It belongs to the universal ribosomal protein uS8 family. Part of the 30S ribosomal subunit. Contacts proteins S5 and S12.

Functionally, one of the primary rRNA binding proteins, it binds directly to 16S rRNA central domain where it helps coordinate assembly of the platform of the 30S subunit. The chain is Small ribosomal subunit protein uS8 from Burkholderia lata (strain ATCC 17760 / DSM 23089 / LMG 22485 / NCIMB 9086 / R18194 / 383).